We begin with the raw amino-acid sequence, 216 residues long: Ribosomal RNA large subunit methyltransferase E (216 aa).

S-adenosyl-L-methionine is bound by residues Gly67, Trp69, Asp87, Asp103, and Asp128. The active-site Proton acceptor is Lys168.

The protein belongs to the class I-like SAM-binding methyltransferase superfamily. RNA methyltransferase RlmE family.

Its subcellular location is the cytoplasm. It carries out the reaction uridine(2552) in 23S rRNA + S-adenosyl-L-methionine = 2'-O-methyluridine(2552) in 23S rRNA + S-adenosyl-L-homocysteine + H(+). Specifically methylates the uridine in position 2552 of 23S rRNA at the 2'-O position of the ribose in the fully assembled 50S ribosomal subunit. The polypeptide is Ribosomal RNA large subunit methyltransferase E (Acinetobacter baylyi (strain ATCC 33305 / BD413 / ADP1)).